Consider the following 102-residue polypeptide: Integration host factor subunit alpha (102 aa).

The protein belongs to the bacterial histone-like protein family. In terms of assembly, heterodimer of an alpha and a beta chain.

Functionally, this protein is one of the two subunits of integration host factor, a specific DNA-binding protein that functions in genetic recombination as well as in transcriptional and translational control. In Buchnera aphidicola subsp. Acyrthosiphon pisum (strain 5A), this protein is Integration host factor subunit alpha.